Reading from the N-terminus, the 305-residue chain is Acetylglutamate kinase (305 aa).

Substrate is bound by residues glycine 67–glycine 68, arginine 89, and asparagine 190.

The protein belongs to the acetylglutamate kinase family. ArgB subfamily.

It localises to the cytoplasm. It catalyses the reaction N-acetyl-L-glutamate + ATP = N-acetyl-L-glutamyl 5-phosphate + ADP. The protein operates within amino-acid biosynthesis; L-arginine biosynthesis; N(2)-acetyl-L-ornithine from L-glutamate: step 2/4. Functionally, catalyzes the ATP-dependent phosphorylation of N-acetyl-L-glutamate. The chain is Acetylglutamate kinase from Bifidobacterium longum (strain NCC 2705).